The primary structure comprises 309 residues: Protein-L-isoaspartate O-methyltransferase (309 aa).

The segment at 1–46 is disordered; that stretch reads MSGERAKRFPLALEDLKRAPRKSDGRAGERHAAIAAPKAADKPAAV. Residues 14 to 32 are compositionally biased toward basic and acidic residues; the sequence is EDLKRAPRKSDGRAGERHA. Low complexity predominate over residues 33 to 46; the sequence is AIAAPKAADKPAAV. Serine 156 is an active-site residue.

Belongs to the methyltransferase superfamily. L-isoaspartyl/D-aspartyl protein methyltransferase family.

It is found in the cytoplasm. It catalyses the reaction [protein]-L-isoaspartate + S-adenosyl-L-methionine = [protein]-L-isoaspartate alpha-methyl ester + S-adenosyl-L-homocysteine. In terms of biological role, catalyzes the methyl esterification of L-isoaspartyl residues in peptides and proteins that result from spontaneous decomposition of normal L-aspartyl and L-asparaginyl residues. It plays a role in the repair and/or degradation of damaged proteins. The chain is Protein-L-isoaspartate O-methyltransferase from Burkholderia vietnamiensis (strain G4 / LMG 22486) (Burkholderia cepacia (strain R1808)).